The following is a 641-amino-acid chain: Pre-mRNA-processing factor 39 (641 aa).

The tract at residues 1–50 (MEKSPEHCAEGSPSPATESAPSATEPPLPSTEPPLPSTEPPLPSTEPPLP) is disordered. A compositionally biased stretch (low complexity) spans 10–23 (EGSPSPATESAPSA). Pro residues predominate over residues 24–50 (TEPPLPSTEPPLPSTEPPLPSTEPPLP). HAT repeat units follow at residues 50–82 (PPLP…YVEQ), 84–116 (NHLF…LEKK), 118–150 (NNIL…FLKE), 158–193 (ETSL…WETE), 304–336 (NFEE…FELE), 338–370 (GSNE…YMEN), and 372–407 (SVEG…QQGN).

This sequence belongs to the PRP39 family.

Its subcellular location is the nucleus. Involved in pre-mRNA splicing. In Xenopus laevis (African clawed frog), this protein is Pre-mRNA-processing factor 39 (prpf39).